We begin with the raw amino-acid sequence, 243 residues long: Ubiquinone biosynthesis O-methyltransferase (243 aa).

Residues R44, G64, D85, and M129 each coordinate S-adenosyl-L-methionine.

This sequence belongs to the methyltransferase superfamily. UbiG/COQ3 family.

It catalyses the reaction a 3-demethylubiquinol + S-adenosyl-L-methionine = a ubiquinol + S-adenosyl-L-homocysteine + H(+). The catalysed reaction is a 3-(all-trans-polyprenyl)benzene-1,2-diol + S-adenosyl-L-methionine = a 2-methoxy-6-(all-trans-polyprenyl)phenol + S-adenosyl-L-homocysteine + H(+). The protein operates within cofactor biosynthesis; ubiquinone biosynthesis. Functionally, O-methyltransferase that catalyzes the 2 O-methylation steps in the ubiquinone biosynthetic pathway. This Cronobacter sakazakii (strain ATCC BAA-894) (Enterobacter sakazakii) protein is Ubiquinone biosynthesis O-methyltransferase.